A 297-amino-acid polypeptide reads, in one-letter code: MAKALQGVMAALLTPFDHQQQLDSESLRRLVRFNIGQGIDGLYVGGSTGEAFVQSLAEREQVLEIVAEEAKGKITLIAHVGTVSTAESQQLASAAKRYGFDAVSAVTPFYYPFSFEEHCDHYRAIIDSADGLPMVVYNIPALSGVKLTLDQINTLVTLPGVSALKQTSGDLFQMEQIRRAHPDLVLYNGYDEIFASGLLAGADGGIGSTYNIMGWRYQGIVQALREGDVAKAQRLQTECNKVIDLLIKTGVFRGLKTVLHYMDVLSVPLCRKPFAPVDEKYLPALKALAQQLMEEKA.

The aceneuramate site is built by Ser47 and Thr48. The Proton donor role is filled by Tyr137. Residue Lys165 is the Schiff-base intermediate with substrate of the active site. 5 residues coordinate aceneuramate: Thr167, Gly189, Asp191, Glu192, and Ser208.

The protein belongs to the DapA family. NanA subfamily. Homotetramer.

Its subcellular location is the cytoplasm. The catalysed reaction is aceneuramate = aldehydo-N-acetyl-D-mannosamine + pyruvate. Its pathway is amino-sugar metabolism; N-acetylneuraminate degradation; D-fructose 6-phosphate from N-acetylneuraminate: step 1/5. Functionally, catalyzes the reversible aldol cleavage of N-acetylneuraminic acid (sialic acid; Neu5Ac) to form pyruvate and N-acetylmannosamine (ManNAc) via a Schiff base intermediate. This chain is N-acetylneuraminate lyase, found in Salmonella choleraesuis (strain SC-B67).